The sequence spans 567 residues: Organic cation transporter-like protein (567 aa).

Residues 1 to 21 are Cytoplasmic-facing; that stretch reads MGYDEAIIHLGDFGRYQKIIY. The helical transmembrane segment at 22-42 threads the bilayer; the sequence is FLICLTSIPVAFHKLAGVFLL. The Extracellular portion of the chain corresponds to 43–127; that stretch reads AKPDFRCALP…TEWNLVCGRD (85 aa). 4 N-linked (GlcNAc...) asparagine glycosylation sites follow: asparagine 55, asparagine 67, asparagine 89, and asparagine 97. A helical transmembrane segment spans residues 128–148; it reads FMAATSDSLFMLGVLLGSIVF. Residues 149 to 158 lie on the Cytoplasmic side of the membrane; that stretch reads GQLSDKYGRK. A helical membrane pass occupies residues 159-179; the sequence is PILFASLVIQVLFGVLAGVAP. Residues 180-189 are Extracellular-facing; sequence EYFTYTFARL. A helical membrane pass occupies residues 190-210; the sequence is MVGATTSGVFLVAYVVAMEMV. At 211 to 219 the chain is on the cytoplasmic side; it reads GPDKRLYAG. The chain crosses the membrane as a helical span at residues 220–240; that stretch reads IFVMMFFSVGFMLTAVFAYFV. Residues 241 to 244 lie on the Extracellular side of the membrane; that stretch reads HDWR. A helical transmembrane segment spans residues 245–265; that stretch reads WLQIALTLPGLIFMFYYWIIP. The Cytoplasmic segment spans residues 266–343; the sequence is ESARWLLLKG…LFCYPNLRRK (78 aa). Positions 304–326 are disordered; it reads LDEGENSEEKAKQKLEDQELDEG. Over residues 310 to 320 the composition is skewed to basic and acidic residues; it reads SEEKAKQKLED. Residues 344–364 form a helical membrane-spanning segment; that stretch reads TLLIFLDWLVTSGVYYGLSWN. At 365-371 the chain is on the extracellular side; the sequence is TSNLGGN. A helical transmembrane segment spans residues 372–392; that stretch reads VLLNFVISGAVEIPAYIFLLL. Over 393-400 the chain is Cytoplasmic; that stretch reads TLNRWGRR. A helical transmembrane segment spans residues 401–421; sequence SILCGCLVMAGLSLLATVIIP. The Extracellular segment spans residues 422-427; that stretch reads QRMHTL. A helical membrane pass occupies residues 428-448; sequence IVACAMLGKLAITASYGTVYI. The Cytoplasmic portion of the chain corresponds to 449 to 462; the sequence is FSAEQFPTVVRNVA. The helical transmembrane segment at 463–483 threads the bilayer; that stretch reads LGAASMVARISGMMAPFLNFL. Topologically, residues 484–489 are extracellular; the sequence is ATIWKP. The chain crosses the membrane as a helical span at residues 490-510; it reads LPLLICGSLTLVAGLLSLLLP. Residues 511 to 567 are Cytoplasmic-facing; the sequence is ETHNKPMLETIADGERFGKKTKADVYLETGQELRAPEAQPLKGSGETNGSTIANGHK. Residues 546–567 are disordered; the sequence is PEAQPLKGSGETNGSTIANGHK. Polar residues predominate over residues 555–567; the sequence is GETNGSTIANGHK.

This sequence belongs to the major facilitator (TC 2.A.1) superfamily. Organic cation transporter (TC 2.A.1.19) family.

The protein resides in the membrane. Functionally, probably transports organic cations. In Drosophila melanogaster (Fruit fly), this protein is Organic cation transporter-like protein (Orct2).